Reading from the N-terminus, the 84-residue chain is Cytochrome b559 subunit alpha (84 aa).

Residues 24–38 traverse the membrane as a helical segment; the sequence is IIHAVTLPAIFIAGF. Residue H26 participates in heme binding.

The protein belongs to the PsbE/PsbF family. Heterodimer of an alpha subunit and a beta subunit. PSII is composed of 1 copy each of membrane proteins PsbA, PsbB, PsbC, PsbD, PsbE, PsbF, PsbH, PsbI, PsbJ, PsbK, PsbL, PsbM, PsbT, PsbX, PsbY, Psb30/Ycf12, peripheral proteins PsbO, CyanoQ (PsbQ), PsbU, PsbV and a large number of cofactors. It forms dimeric complexes. Heme b serves as cofactor.

It is found in the cellular thylakoid membrane. Its function is as follows. This b-type cytochrome is tightly associated with the reaction center of photosystem II (PSII). PSII is a light-driven water:plastoquinone oxidoreductase that uses light energy to abstract electrons from H(2)O, generating O(2) and a proton gradient subsequently used for ATP formation. It consists of a core antenna complex that captures photons, and an electron transfer chain that converts photonic excitation into a charge separation. The chain is Cytochrome b559 subunit alpha from Prochlorococcus marinus subsp. pastoris (strain CCMP1986 / NIES-2087 / MED4).